A 179-amino-acid polypeptide reads, in one-letter code: Oryzines biosynthesis cluster protein J (179 aa).

The Cupin type-2 domain maps to 88-148; the sequence is YVDYHPGCEP…NHCWRNPSKT (61 aa).

The protein belongs to the oryJ family.

It participates in secondary metabolite biosynthesis. In terms of biological role, part of the gene cluster that mediates the biosynthesis of oryzines, natural products with an unusual maleidride backbone. The two subunits of the fungal fatty acid synthase oryfasA and oryfasB probably form octenoic acid. This fatty acid is most likely activated by the acyl-CoA ligase oryP to give octenyl-CoA before the citrate synthase-like protein oryE catalyzes condensation with oxaloacetate to form tricarboxylic acid. The next steps of the pathways are conjectural, but a favorite possible route has been proposed, beginning with decarboxylation and concomitant dehydration by the decarboxylase oryM, followed by tautomerization, which may lead to the production of a diene intermediate. Reduction of this diene intermediate could give the known metabolite piliformic acid. On the pathway to oryzine B and oryzine A, however, hydroxylation of the diene by the alpha-ketoglutarate-dependent dioxygenase oryG and lactonisation by the lactonohydrolases oryH or oryL could give oryzine B directly. Finally, enoyl reduction by the dehydrogenase oryD would then convert oryzine B into oryzine A. The chain is Oryzines biosynthesis cluster protein J from Aspergillus oryzae (strain ATCC 42149 / RIB 40) (Yellow koji mold).